We begin with the raw amino-acid sequence, 469 residues long: UDP-N-acetylmuramoylalanine--D-glutamate ligase (469 aa).

Residue 121 to 127 coordinates ATP; sequence GTNGKST.

It belongs to the MurCDEF family.

It is found in the cytoplasm. The catalysed reaction is UDP-N-acetyl-alpha-D-muramoyl-L-alanine + D-glutamate + ATP = UDP-N-acetyl-alpha-D-muramoyl-L-alanyl-D-glutamate + ADP + phosphate + H(+). Its pathway is cell wall biogenesis; peptidoglycan biosynthesis. Its function is as follows. Cell wall formation. Catalyzes the addition of glutamate to the nucleotide precursor UDP-N-acetylmuramoyl-L-alanine (UMA). This chain is UDP-N-acetylmuramoylalanine--D-glutamate ligase, found in Agrobacterium fabrum (strain C58 / ATCC 33970) (Agrobacterium tumefaciens (strain C58)).